A 430-amino-acid polypeptide reads, in one-letter code: Elongation factor 1-gamma (430 aa).

The 83-residue stretch at 2–84 (VAGKLYTYPE…YVANETLRGS (83 aa)) folds into the GST N-terminal domain. Residues 85–213 (SDLEKAQIIQ…FKLCEKAGEF (129 aa)) enclose the GST C-terminal domain. 2 stretches are compositionally biased toward basic and acidic residues: residues 232–255 (KTEK…KEQE) and 269–278 (PKSKDPFDEM). The interval 232-278 (KTEKAPKAVKAKPEKKEVPKKEQEEPADAAEEALAAEPKSKDPFDEM) is disordered. An EF-1-gamma C-terminal domain is found at 271 to 430 (SKDPFDEMPK…RKFNQGKIFK (160 aa)).

In terms of assembly, EF-1 is composed of four subunits: alpha, beta, delta, and gamma.

Probably plays a role in anchoring the complex to other cellular components. The chain is Elongation factor 1-gamma from Artemia salina (Brine shrimp).